The chain runs to 31 residues: Cytochrome b6-f complex subunit 6 (31 aa).

The chain crosses the membrane as a helical span at residues Ile-3–Leu-23.

It belongs to the PetL family. The 4 large subunits of the cytochrome b6-f complex are cytochrome b6, subunit IV (17 kDa polypeptide, PetD), cytochrome f and the Rieske protein, while the 4 small subunits are PetG, PetL, PetM and PetN. The complex functions as a dimer.

It localises to the plastid. The protein localises to the chloroplast thylakoid membrane. Its function is as follows. Component of the cytochrome b6-f complex, which mediates electron transfer between photosystem II (PSII) and photosystem I (PSI), cyclic electron flow around PSI, and state transitions. PetL is important for photoautotrophic growth as well as for electron transfer efficiency and stability of the cytochrome b6-f complex. The protein is Cytochrome b6-f complex subunit 6 of Trieres chinensis (Marine centric diatom).